A 234-amino-acid chain; its full sequence is Biotin transport ATP-binding protein BioM (234 aa).

The 230-residue stretch at 1–230 (MQAIDIGHVT…YIAAMQALAR (230 aa)) folds into the ABC transporter domain. 35–42 (GRNGAGKS) serves as a coordination point for ATP.

This sequence belongs to the ABC transporter superfamily. Part of a biotin transporter holocomplex composed of BioM, BioN and BioY. BioMN complexes can be readily purified, but not BioMY complexes. Only the BioMNY complex has ATPase activity.

The protein localises to the cell inner membrane. Required for biotin uptake under very low (pM) biotin concentrations but not under higher (nM) concentrations. This chain is Biotin transport ATP-binding protein BioM (bioM), found in Rhodobacter capsulatus (strain ATCC BAA-309 / NBRC 16581 / SB1003).